Reading from the N-terminus, the 429-residue chain is MRVLIIGSGGREHALGWKAAQNPNVETIFIAPGNAGTALEPKLENVNIDVEDIAGLVAFAKEKAIELTIVGPEAPLVIGVVDAFREAGLPIFGPTQAAAQLEGSKAFTKDFLARHQIPTGAYANFTEIEPALAYVREQGAPIVVKADGLAAGKGVIVAMTLEEAEDAIKDMLAGNAFGDAGSRVVIEEFLDGEEASFIVMVDGENVLPMATSQDHKRVGDKDTGPNTGGMGAYSPAPVVTPEIHNRIMEEVIYPTVRGMASEGNPYTGFLYAGLMIDKDGTPKVIEYNCRFGDPETQPIMMRMESDLVDLCLAAIDEKLDQVESKWDPRASIGIVLAAGGYPAAYNKGDVISGLPQVEIEGEKVFHAGTDNQDGDIVTNGGRVLCATALGNSVSEAQQRAYELAKQISWDGMFHRNDIGYRAIAREQEK.

Residues 109–316 (KDFLARHQIP…LVDLCLAAID (208 aa)) enclose the ATP-grasp domain. An ATP-binding site is contributed by 135–196 (VREQGAPIVV…EEFLDGEEAS (62 aa)). A disordered region spans residues 212–235 (SQDHKRVGDKDTGPNTGGMGAYSP). Residues 213–223 (QDHKRVGDKDT) are compositionally biased toward basic and acidic residues. Residues Glu286 and Asn288 each coordinate Mg(2+).

It belongs to the GARS family. Mg(2+) serves as cofactor. It depends on Mn(2+) as a cofactor.

The catalysed reaction is 5-phospho-beta-D-ribosylamine + glycine + ATP = N(1)-(5-phospho-beta-D-ribosyl)glycinamide + ADP + phosphate + H(+). It participates in purine metabolism; IMP biosynthesis via de novo pathway; N(1)-(5-phospho-D-ribosyl)glycinamide from 5-phospho-alpha-D-ribose 1-diphosphate: step 2/2. The sequence is that of Phosphoribosylamine--glycine ligase from Vibrio parahaemolyticus serotype O3:K6 (strain RIMD 2210633).